A 427-amino-acid polypeptide reads, in one-letter code: 3-phosphoshikimate 1-carboxyvinyltransferase (427 aa).

Residues K23, S24, and R28 each coordinate 3-phosphoshikimate. Position 23 (K23) interacts with phosphoenolpyruvate. Phosphoenolpyruvate contacts are provided by G97 and R125. The 3-phosphoshikimate site is built by S170, S171, Q172, S198, D314, N337, and K341. Residue Q172 participates in phosphoenolpyruvate binding. The active-site Proton acceptor is D314. R345, R387, and K412 together coordinate phosphoenolpyruvate.

The protein belongs to the EPSP synthase family. As to quaternary structure, monomer.

The protein resides in the cytoplasm. The catalysed reaction is 3-phosphoshikimate + phosphoenolpyruvate = 5-O-(1-carboxyvinyl)-3-phosphoshikimate + phosphate. It participates in metabolic intermediate biosynthesis; chorismate biosynthesis; chorismate from D-erythrose 4-phosphate and phosphoenolpyruvate: step 6/7. Its function is as follows. Catalyzes the transfer of the enolpyruvyl moiety of phosphoenolpyruvate (PEP) to the 5-hydroxyl of shikimate-3-phosphate (S3P) to produce enolpyruvyl shikimate-3-phosphate and inorganic phosphate. The sequence is that of 3-phosphoshikimate 1-carboxyvinyltransferase from Buchnera aphidicola subsp. Acyrthosiphon pisum (strain Tuc7).